The chain runs to 588 residues: Aspartate--tRNA ligase (588 aa).

Glu-177 is an L-aspartate binding site. The segment at 201–204 (QLFK) is aspartate. Arg-223 contributes to the L-aspartate binding site. ATP contacts are provided by residues 223 to 225 (RDE) and Gln-232. His-451 serves as a coordination point for L-aspartate. Glu-485 contacts ATP. Arg-492 provides a ligand contact to L-aspartate. Residue 537–540 (GLDR) coordinates ATP.

Belongs to the class-II aminoacyl-tRNA synthetase family. Type 1 subfamily. As to quaternary structure, homodimer.

It is found in the cytoplasm. It carries out the reaction tRNA(Asp) + L-aspartate + ATP = L-aspartyl-tRNA(Asp) + AMP + diphosphate. Catalyzes the attachment of L-aspartate to tRNA(Asp) in a two-step reaction: L-aspartate is first activated by ATP to form Asp-AMP and then transferred to the acceptor end of tRNA(Asp). The protein is Aspartate--tRNA ligase of Staphylococcus aureus (strain NCTC 8325 / PS 47).